Here is a 583-residue protein sequence, read N- to C-terminus: RuBisCO large subunit-binding protein subunit alpha, chloroplastic (583 aa).

The segment covering 1-14 (MATANALSSPSVLC) has biased composition (polar residues). The tract at residues 1 to 35 (MATANALSSPSVLCSSRQGKLSGGSQQKGQRVSYR) is disordered. Residues 1 to 45 (MATANALSSPSVLCSSRQGKLSGGSQQKGQRVSYRKANRRFSLRA) constitute a chloroplast transit peptide. Over residues 15-31 (SSRQGKLSGGSQQKGQR) the composition is skewed to low complexity. S89 carries the post-translational modification Phosphoserine.

This sequence belongs to the chaperonin (HSP60) family. Oligomer of probably six alpha and six beta subunits.

It localises to the plastid. It is found in the chloroplast. In terms of biological role, this protein binds RuBisCO small and large subunits and is implicated in the assembly of the enzyme oligomer. The sequence is that of RuBisCO large subunit-binding protein subunit alpha, chloroplastic from Brassica napus (Rape).